Reading from the N-terminus, the 440-residue chain is Chromosome partition protein MukF (440 aa).

Residues 208 to 236 (LSETSGTLRELQDTLEAAGDKLQANLLRI) are leucine-zipper.

The protein belongs to the MukF family. As to quaternary structure, interacts, and probably forms a ternary complex, with MukE and MukB via its C-terminal region. The complex formation is stimulated by calcium or magnesium. It is required for an interaction between MukE and MukB.

The protein resides in the cytoplasm. The protein localises to the nucleoid. Functionally, involved in chromosome condensation, segregation and cell cycle progression. May participate in facilitating chromosome segregation by condensation DNA from both sides of a centrally located replisome during cell division. Not required for mini-F plasmid partitioning. Probably acts via its interaction with MukB and MukE. Overexpression results in anucleate cells. It has a calcium binding activity. The polypeptide is Chromosome partition protein MukF (Escherichia coli O9:H4 (strain HS)).